The following is a 581-amino-acid chain: uncharacterized protein (581 aa).

The next 12 membrane-spanning stretches (helical) occupy residues 84 to 104 (MISVGGAIGSGLYVGSGSAFA), 109 to 129 (ASVIINYILIGIMMIFVIYAL), 149 to 169 (FIDPAWGFAVSWNYFLNYFVT), 187 to 207 (INSAAWISIFLAVVIVINLFG), 216 to 236 (FILSTIKVIATVGFIILAIII), 266 to 286 (FCSVFTTAAFSFSGTEIIGLA), 304 to 324 (VFWRIAIFYVVSLILIGLLVS), 348 to 368 (ANIKGLPSVFNAVIIISVVSV), 399 to 419 (VGRPLIAMVVVLLFGFFAYIN), 432 to 452 (VFDWLLAISGLSSFFTWGSIC), 485 to 505 (IGLGFNILCLMAEFYVSLFLI), and 514 to 534 (FFQGYLAACIALAFFIGYKIY).

Belongs to the amino acid-polyamine-organocation (APC) superfamily.

It localises to the membrane. This is an uncharacterized protein from Schizosaccharomyces pombe (strain 972 / ATCC 24843) (Fission yeast).